The chain runs to 855 residues: DNA replication helicase (855 aa).

78 to 85 (GNAGSGKS) lines the ATP pocket.

It belongs to the herpesviridae helicase family. Associates with the primase and the primase-associated factor to form the helicase-primase complex.

Its subcellular location is the host nucleus. Its function is as follows. Component of the helicase/primase complex. Unwinds the DNA at the replication forks and generates single-stranded DNA for both leading and lagging strand synthesis. The primase synthesizes short RNA primers on the lagging strand that the polymerase elongates using dNTPs. Possesses helicase-like motifs and therefore may act as the helicase subunit of the complex. This Amazona oratrix (yellow-headed parrot) protein is DNA replication helicase.